Reading from the N-terminus, the 151-residue chain is Transcriptional regulator MraZ (151 aa).

SpoVT-AbrB domains lie at 5–52 and 81–124; these read IHQV…PLSE and ATDL…SQEE.

It belongs to the MraZ family. Forms oligomers.

It is found in the cytoplasm. Its subcellular location is the nucleoid. This chain is Transcriptional regulator MraZ, found in Marinomonas sp. (strain MWYL1).